Reading from the N-terminus, the 390-residue chain is Odorant receptor 85b (390 aa).

The Cytoplasmic segment spans residues 1–30 (MEKLMKYASFFYTAVGIRPYTNGEESKMNK). The helical transmembrane segment at 31–51 (LIFHIVFWSNVINLSFVGLFE) threads the bilayer. Residues 52–66 (SIYVYSAFMDNKFLE) are Extracellular-facing. Residues 67-87 (AVTALSYIGFVTVGMSKMFFI) form a helical membrane-spanning segment. Over 88–126 (RWKKTAITELINELKEIYPNGLIREERYNLPMYLGTCSR) the chain is Cytoplasmic. A helical membrane pass occupies residues 127–147 (ISLIYSLLYSVLIWTFNLFCV). Topologically, residues 148–200 (MEYWVYDKWLNIRVVGKQLPYLMYIPWKWQDNWSYYPLLFSQNFAGYTSAAGQ) are extracellular. The N-linked (GlcNAc...) asparagine glycan is linked to Asn-179. The chain crosses the membrane as a helical span at residues 201–221 (ISTDVLLCAVATQLVMHFDFL). Over 222–260 (SNSMERHELSGDWKKDSRFLVDIVRYHERILRLSDAVND) the chain is Cytoplasmic. A helical transmembrane segment spans residues 261–281 (IFGIPLLLNFMVSSFVICFVG). At 282–291 (FQMTVGVPPD) the chain is on the extracellular side. The chain crosses the membrane as a helical span at residues 292–312 (IVVKLFLFLVSSMSQVYLICH). At 313-360 (YGQLVADASYGFSVATYNQKWYKADVRYKRALVIIIARSQKVTFLKAT) the chain is on the cytoplasmic side. The chain crosses the membrane as a helical span at residues 361-381 (IFLDITRSTMTDLLQISYKFF). The Extracellular segment spans residues 382-390 (ALLRTMYTQ).

Belongs to the insect chemoreceptor superfamily. Heteromeric odorant receptor channel (TC 1.A.69) family. Or49a subfamily. As to quaternary structure, interacts with Orco. Complexes exist early in the endomembrane system in olfactory sensory neurons (OSNs), coupling these complexes to the conserved ciliary trafficking pathway. As to expression, expressed in olfactory sensory neurons in the antenna.

It is found in the cell membrane. Its function is as follows. Odorant receptor which mediates acceptance or avoidance behavior, depending on its substrates. The odorant receptor repertoire encodes a large collection of odor stimuli that vary widely in identity, intensity, and duration. Forms a complex with Orco to form odorant-sensing units, providing sensitive and prolonged odorant signaling and calcium permeability. Involved in the behavioral responses to 2-heptanone, amyl acetate, and butyl acetate. This is Odorant receptor 85b (Or85b) from Drosophila melanogaster (Fruit fly).